Here is a 176-residue protein sequence, read N- to C-terminus: Acireductone dioxygenase (176 aa).

The segment at 1–21 is disordered; that stretch reads MKAYWYDNKPGDQREPHDSGR. Positions 9 to 20 are enriched in basic and acidic residues; sequence KPGDQREPHDSG. Positions 81, 83, 87, and 126 each coordinate Fe(2+). 4 residues coordinate Ni(2+): histidine 81, histidine 83, glutamate 87, and histidine 126.

Belongs to the acireductone dioxygenase (ARD) family. Fe(2+) serves as cofactor. Ni(2+) is required as a cofactor.

The protein resides in the cytoplasm. It localises to the nucleus. It carries out the reaction 1,2-dihydroxy-5-(methylsulfanyl)pent-1-en-3-one + O2 = 4-methylsulfanyl-2-oxobutanoate + formate + 2 H(+). The catalysed reaction is 1,2-dihydroxy-5-(methylsulfanyl)pent-1-en-3-one + O2 = 3-(methylsulfanyl)propanoate + CO + formate + 2 H(+). The protein operates within amino-acid biosynthesis; L-methionine biosynthesis via salvage pathway; L-methionine from S-methyl-5-thio-alpha-D-ribose 1-phosphate: step 5/6. In terms of biological role, catalyzes 2 different reactions between oxygen and the acireductone 1,2-dihydroxy-3-keto-5-methylthiopentene (DHK-MTPene) depending upon the metal bound in the active site. Fe-containing acireductone dioxygenase (Fe-ARD) produces formate and 2-keto-4-methylthiobutyrate (KMTB), the alpha-ketoacid precursor of methionine in the methionine recycle pathway. Ni-containing acireductone dioxygenase (Ni-ARD) produces methylthiopropionate, carbon monoxide and formate, and does not lie on the methionine recycle pathway. This Aspergillus fumigatus (strain ATCC MYA-4609 / CBS 101355 / FGSC A1100 / Af293) (Neosartorya fumigata) protein is Acireductone dioxygenase (adi1).